Consider the following 444-residue polypeptide: Multidrug resistance protein MdtA (444 aa).

An N-terminal signal peptide occupies residues 1-20 (MKSQSKRTSRLFVFVGVVVA). Polar residues predominate over residues 37–52 (NNTSGAQQSARGQDTS). Disordered stretches follow at residues 37 to 60 (NNTSGAQQSARGQDTSHGGRRNTP) and 398 to 444 (TPRS…AEKS). The span at 409–419 (ASAEKAAAEAE) shows a compositional bias: low complexity. The segment covering 435–444 (ARSTTAAEKS) has biased composition (polar residues).

It belongs to the membrane fusion protein (MFP) (TC 8.A.1) family. As to quaternary structure, part of a tripartite efflux system composed of MdtA, MdtB and MdtC.

The protein localises to the cell inner membrane. The polypeptide is Multidrug resistance protein MdtA (Yersinia pseudotuberculosis serotype O:3 (strain YPIII)).